The sequence spans 644 residues: Far upstream element-binding protein 1 (644 aa).

Disordered stretches follow at residues 1–31 and 44–94; these read MADY…NDAF and KIGG…PMHQ. A2 bears the N-acetylalanine mark. Over residues 14 to 27 the composition is skewed to gly residues; the sequence is SAGGGGGGGGGGGV. A phosphoserine mark is found at S52 and S55. The segment covering 65-77 has biased composition (basic and acidic residues); the sequence is RPLEDGDQPDAKK. Over residues 81-94 the composition is skewed to polar residues; that stretch reads QNDSFGTQLPPMHQ. KH domains lie at 100–164, 185–251, and 275–339; these read VMTE…KRLL, NAVQ…KEMV, and NEGI…AEII. Position 140 is a phosphoserine (S140). The residue at position 153 (T153) is a Phosphothreonine. Residues R321, R359, R361, and R363 each carry the omega-N-methylarginine modification. Residues 346–365 are disordered; the sequence is VQAGNPGGPGPGGRGRGRGQ. The span at 350 to 365 shows a compositional bias: gly residues; that stretch reads NPGGPGPGGRGRGRGQ. Residues 376 to 443 form the KH 4 domain; the sequence is LQEFNFIVPT…QQIDYARQLI (68 aa). A Phosphothreonine modification is found at T432. Disordered regions lie at residues 447 to 532 and 548 to 580; these read IGGP…GTDP and QAQP…AGQV. A compositionally biased stretch (pro residues) spans 468–505; sequence PHGPPGPPGPGTPMGPYNPAPYNPGPPGPAPHGPPAPY. The span at 556–573 shows a compositional bias: low complexity; it reads PAGAPTTTQTNGQGDQQN. S630 is modified (phosphoserine).

As to quaternary structure, found in a complex with PUF60 and far upstream element (FUSE) DNA segment. Interacts with PUF60 and JTV1. In terms of processing, ubiquitinated. This targets the protein for proteasome-mediated degradation.

The protein localises to the nucleus. Regulates MYC expression by binding to a single-stranded far-upstream element (FUSE) upstream of the MYC promoter. May act both as activator and repressor of transcription. This chain is Far upstream element-binding protein 1 (FUBP1), found in Homo sapiens (Human).